The primary structure comprises 394 residues: Putative serine protease HhoA (394 aa).

An N-terminal signal peptide occupies residues 1-24 (MKYPTWLRRIGGYLLAFAVGTAFG). The region spanning 293–377 (MMNITVDQAQ…ALKLDLLRGD (85 aa)) is the PDZ domain.

The protein belongs to the peptidase S1C family.

The protein resides in the periplasm. Functionally, a putative protease, its function overlaps that of the related putative proteases HhoB and HtrA. The sequence is that of Putative serine protease HhoA (hhoA) from Synechocystis sp. (strain ATCC 27184 / PCC 6803 / Kazusa).